Reading from the N-terminus, the 331-residue chain is DNA-directed RNA polymerase subunit alpha (331 aa).

Residues 1-232 (MQGTFRDFLK…DQLSVFVDLE (232 aa)) form an alpha N-terminal domain (alpha-NTD) region. The segment at 247-331 (VDPILLRPID…AGLGEDRVVG (85 aa)) is alpha C-terminal domain (alpha-CTD).

Belongs to the RNA polymerase alpha chain family. As to quaternary structure, homodimer. The RNAP catalytic core consists of 2 alpha, 1 beta, 1 beta' and 1 omega subunit. When a sigma factor is associated with the core the holoenzyme is formed, which can initiate transcription.

It catalyses the reaction RNA(n) + a ribonucleoside 5'-triphosphate = RNA(n+1) + diphosphate. DNA-dependent RNA polymerase catalyzes the transcription of DNA into RNA using the four ribonucleoside triphosphates as substrates. The polypeptide is DNA-directed RNA polymerase subunit alpha (Alkalilimnicola ehrlichii (strain ATCC BAA-1101 / DSM 17681 / MLHE-1)).